The primary structure comprises 164 residues: Large ribosomal subunit protein uL10 (164 aa).

Belongs to the universal ribosomal protein uL10 family. Part of the ribosomal stalk of the 50S ribosomal subunit. The N-terminus interacts with L11 and the large rRNA to form the base of the stalk. The C-terminus forms an elongated spine to which L12 dimers bind in a sequential fashion forming a multimeric L10(L12)X complex.

Its function is as follows. Forms part of the ribosomal stalk, playing a central role in the interaction of the ribosome with GTP-bound translation factors. In Helicobacter pylori (strain J99 / ATCC 700824) (Campylobacter pylori J99), this protein is Large ribosomal subunit protein uL10 (rplJ).